The following is a 320-amino-acid chain: Aspartate carbamoyltransferase catalytic subunit (320 aa).

Carbamoyl phosphate is bound by residues Arg68 and Thr69. Residue Lys96 participates in L-aspartate binding. The carbamoyl phosphate site is built by Arg118, His148, and Gln151. 2 residues coordinate L-aspartate: Arg181 and Arg236. Carbamoyl phosphate is bound by residues Gly277 and Pro278.

This sequence belongs to the aspartate/ornithine carbamoyltransferase superfamily. ATCase family. Heterododecamer (2C3:3R2) of six catalytic PyrB chains organized as two trimers (C3), and six regulatory PyrI chains organized as three dimers (R2).

It carries out the reaction carbamoyl phosphate + L-aspartate = N-carbamoyl-L-aspartate + phosphate + H(+). Its pathway is pyrimidine metabolism; UMP biosynthesis via de novo pathway; (S)-dihydroorotate from bicarbonate: step 2/3. Functionally, catalyzes the condensation of carbamoyl phosphate and aspartate to form carbamoyl aspartate and inorganic phosphate, the committed step in the de novo pyrimidine nucleotide biosynthesis pathway. This chain is Aspartate carbamoyltransferase catalytic subunit, found in Delftia acidovorans (strain DSM 14801 / SPH-1).